The following is a 288-amino-acid chain: Serine/threonine-protein phosphatase PGAM5, mitochondrial (288 aa).

Residues 1-6 (MAFRQA) are Mitochondrial matrix-facing. The chain crosses the membrane as a helical span at residues 7-29 (LQLAACGLAGGSAAVLFSAVAVG). Over 30–288 (KPRGGGDADT…FMPPDKITRS (259 aa)) the chain is Mitochondrial intermembrane. The tract at residues 76–81 (NVESGE) is interaction with KEAP1. 2 positions are modified to phosphoserine: Ser79 and Ser86. Residues Lys115, Lys143, and Lys190 each carry the N6-acetyllysine modification.

The protein belongs to the phosphoglycerate mutase family. BPG-dependent PGAM subfamily. In terms of assembly, dimer. Forms a ternary complex with NFE2L2 and KEAP1. Interacts with BCL2L1 and MAP3K5. Upon TNF-induced necrosis, forms in complex with RIPK1, RIPK3 and MLKL; the formation of this complex leads to PGAM5 phosphorylation. Isoform 2, but not isoform 1, interacts with DNM1L; this interaction leads to DNM1L dephosphorylation and activation and eventually to mitochondria fragmentation. Phosphorylated by the RIPK1/RIPK3 complex under necrotic conditions. This phosphorylation increases PGAM5 phosphatase activity. In terms of processing, proteolytically cleaved by PARL in response to loss of mitochondrial membrane potential.

Its subcellular location is the mitochondrion outer membrane. It is found in the mitochondrion inner membrane. It carries out the reaction O-phospho-L-seryl-[protein] + H2O = L-seryl-[protein] + phosphate. The catalysed reaction is O-phospho-L-threonyl-[protein] + H2O = L-threonyl-[protein] + phosphate. Mitochondrial serine/threonine phosphatase that dephosphorylates various substrates and thus plays a role in different biological processes including cellular senescence or mitophagy. Modulates cellular senescence by regulating mitochondrial dynamics. Mechanistically, participates in mitochondrial fission through dephosphorylating DNM1L/DRP1. Additionally, dephosphorylates MFN2 in a stress-sensitive manner and consequently protects it from ubiquitination and degradation to promote mitochondrial network formation. Regulates mitophagy independent of PARKIN by interacting with and dephosphorylating FUNDC1, which interacts with LC3. Regulates anti-oxidative response by forming a tertiary complex with KEAP1 and NRF2. Regulates necroptosis by acting as a RIPK3 target and recruiting the RIPK1-RIPK3-MLKL necrosis 'attack' complex to mitochondria. This chain is Serine/threonine-protein phosphatase PGAM5, mitochondrial (Pgam5), found in Mus musculus (Mouse).